A 188-amino-acid chain; its full sequence is Probable chorismate pyruvate-lyase (188 aa).

Substrate is bound by residues R90, L128, and E175.

The protein belongs to the UbiC family.

Its subcellular location is the cytoplasm. It carries out the reaction chorismate = 4-hydroxybenzoate + pyruvate. Its pathway is cofactor biosynthesis; ubiquinone biosynthesis. In terms of biological role, removes the pyruvyl group from chorismate, with concomitant aromatization of the ring, to provide 4-hydroxybenzoate (4HB) for the ubiquinone pathway. The chain is Probable chorismate pyruvate-lyase from Marinobacter nauticus (strain ATCC 700491 / DSM 11845 / VT8) (Marinobacter aquaeolei).